A 490-amino-acid chain; its full sequence is Tryptophan 5-hydroxylase 2 (490 aa).

A Phosphoserine modification is found at S19. The segment covering 31–42 (LGSSTLNKPNSG) has biased composition (polar residues). The segment at 31–58 (LGSSTLNKPNSGKNDDKGNKGSSKREAA) is disordered. The span at 43–58 (KNDDKGNKGSSKREAA) shows a compositional bias: basic and acidic residues. The 76-residue stretch at 65-140 (AVVFSLKNEV…TIVTLNPPEN (76 aa)) folds into the ACT domain. H318, H323, and E363 together coordinate Fe cation.

It belongs to the biopterin-dependent aromatic amino acid hydroxylase family. Interacts with DNAJC12. Requires Fe(2+) as cofactor. Brain specific.

The enzyme catalyses (6R)-L-erythro-5,6,7,8-tetrahydrobiopterin + L-tryptophan + O2 = 5-hydroxy-L-tryptophan + (4aS,6R)-4a-hydroxy-L-erythro-5,6,7,8-tetrahydrobiopterin. It participates in aromatic compound metabolism; serotonin biosynthesis; serotonin from L-tryptophan: step 1/2. The chain is Tryptophan 5-hydroxylase 2 (TPH2) from Homo sapiens (Human).